Consider the following 323-residue polypeptide: MTDLPSSGPRPGEPLSRVGHRLLLVHAHPDDESINNGATMAKYAAEGARVTLVTCTLGEEGEVIPPSLAHLAPDRDDTLGPYRVDELAGAMKELGVTDHRFLGGAGRYRDSGMMGVEQNERPGAFWSADVDEAAAHLVRVVREVRPQVLVTYDPDGGYGHPDHIQAHRVAMRAAGLAADPAFRPDLGEPWDIAKVYWNRVPRGVVLEGFERLRRDLAEPGRVPFRQAASVTDVPGVVDDHLVTTEIDGTGFAAAKAAAMRAHATQIEVAEPYFALSNALAQPLLSTEYYELVRGRREGGSRESDLFEGIPGISFEERQNGTAL.

Zn(2+)-binding residues include His28, Asp31, and His163.

Belongs to the MshB deacetylase family. Zn(2+) serves as cofactor.

It carries out the reaction 1D-myo-inositol 2-acetamido-2-deoxy-alpha-D-glucopyranoside + H2O = 1D-myo-inositol 2-amino-2-deoxy-alpha-D-glucopyranoside + acetate. In terms of biological role, catalyzes the deacetylation of 1D-myo-inositol 2-acetamido-2-deoxy-alpha-D-glucopyranoside (GlcNAc-Ins) in the mycothiol biosynthesis pathway. The protein is 1D-myo-inositol 2-acetamido-2-deoxy-alpha-D-glucopyranoside deacetylase of Streptomyces scabiei (strain 87.22).